Consider the following 208-residue polypeptide: Large ribosomal subunit protein uL3 (208 aa).

Gln-149 is subject to N5-methylglutamine.

It belongs to the universal ribosomal protein uL3 family. In terms of assembly, part of the 50S ribosomal subunit. Forms a cluster with proteins L14 and L19. Post-translationally, methylated by PrmB.

Its function is as follows. One of the primary rRNA binding proteins, it binds directly near the 3'-end of the 23S rRNA, where it nucleates assembly of the 50S subunit. This chain is Large ribosomal subunit protein uL3, found in Haemophilus ducreyi (strain 35000HP / ATCC 700724).